The primary structure comprises 1039 residues: Serine/threonine-protein kinase Tao (1039 aa).

In terms of domain architecture, Protein kinase spans 27–280 (FEDLREIGHG…SAKLLTHAYV (254 aa)). ATP-binding positions include 33–41 (IGHGSFGAV) and Lys-56. Asp-150 functions as the Proton acceptor in the catalytic mechanism. Disordered stretches follow at residues 324–457 (SAVG…NSAS), 485–508 (GGGG…LADR), 629–648 (HQQD…KKLH), and 677–707 (WKRE…KQHE). The span at 341-350 (SSKSNSITSE) shows a compositional bias: polar residues. Positions 359–376 (SAASSQSSSSNSIPAAAQ) are enriched in low complexity. Positions 377–387 (NHHHIAAHHHQ) are enriched in basic residues. Low complexity-rich tracts occupy residues 388 to 397 (QAASAAVAAA) and 413 to 429 (PSGQ…VSRN). The span at 444 to 454 (HSMNNNVTPTN) shows a compositional bias: polar residues. The segment covering 485–500 (GGGGTGTGGSGGGSPA) has biased composition (gly residues). Coiled-coil stretches lie at residues 631–765 (QDVE…MLLK) and 835–993 (KQFR…DNES). The segment covering 677 to 693 (WKRELSMDESTPKRQRD) has biased composition (basic and acidic residues).

Belongs to the protein kinase superfamily. STE Ser/Thr protein kinase family. STE20 subfamily. In terms of assembly, interacts with Schip1; the interaction enhances Tao kinase activity. Mg(2+) serves as cofactor. Autophosphorylated. In terms of tissue distribution, in the posterior midgut, expressed in almost all intestinal cell types including intestinal stem cells and enterocytes (at protein level). Maternally expressed, ubiquitously distributed in the egg and early embryo and enriched in the germ plasm at the posterior pole of the early embryo including the pole cells.

It localises to the cytoplasm. Its subcellular location is the cytoskeleton. The protein localises to the spindle. The protein resides in the membrane. It is found in the perikaryon. It localises to the cell cortex. Its subcellular location is the cell projection. The protein localises to the axon. The catalysed reaction is L-seryl-[protein] + ATP = O-phospho-L-seryl-[protein] + ADP + H(+). It carries out the reaction L-threonyl-[protein] + ATP = O-phospho-L-threonyl-[protein] + ADP + H(+). Functionally, serine/threonine-protein kinase which regulates the Hippo/SWH (Sav/Wts/Hpo) signaling pathway, a signaling pathway that plays a pivotal role in organ size control and tumor suppression by restricting proliferation and promoting apoptosis. The core of this pathway is composed of a kinase cascade wherein Hippo (hpo), in complex with its regulatory protein Salvador (sav), phosphorylates and activates Warts (wts) in complex with its regulatory protein Mats, which in turn phosphorylates and inactivates the Yorkie (yki) oncoprotein. In imaginal cells, phosphorylates and activates hpo and leads to repression of yki. In the midgut, negatively regulates the proliferation of intestinal stem cells through the Hippo/SWH pathway. Independent of the hippo/SWH pathway, regulates epithelial morphogenesis in follicle cells by promoting the endocytosis of Fas2 and reducing lateral adhesion between epithelial cells which, in turn, permits shrinking of the lateral membrane and initiates morphogenesis of the squamous epithelium. Required for the development of both the mushroom body and the ellipsoid body in the brain and may act as a negative regulator of the par-1 kinase. Negatively regulates the JNK pathway which increases sensitivity to ethanol exposure. Plays a role in the control of cell shape by negatively regulating the growth of microtubule plus-ends as they contact the actin-rich cell cortex. Required for the induction of apoptosis in pole cells by promoting expression of skl which enhances activity of the apoptosis activator hid. Induces in vitro expression of large, highly dynamic, microtubule-dependent lamellopodia-like cytoplasmic expansions which constantly probe the environment. Its function is as follows. Induces in vitro expression of actin-dependent filopodia-like cytoplasmic protrusions which firmly attach to the substrate. Antagonizes the activity of isoform D. This chain is Serine/threonine-protein kinase Tao, found in Drosophila melanogaster (Fruit fly).